The following is a 202-amino-acid chain: Small ribosomal subunit protein uS4 (202 aa).

Residues 15–42 (LGDLPGLTRKAAKRSYPPGQHGQARRKR) form a disordered region. Residues 90-152 (SRLDNICFRL…KGSKQLAEGN (63 aa)) enclose the S4 RNA-binding domain.

It belongs to the universal ribosomal protein uS4 family. Part of the 30S ribosomal subunit. Contacts protein S5. The interaction surface between S4 and S5 is involved in control of translational fidelity.

In terms of biological role, one of the primary rRNA binding proteins, it binds directly to 16S rRNA where it nucleates assembly of the body of the 30S subunit. Functionally, with S5 and S12 plays an important role in translational accuracy. The chain is Small ribosomal subunit protein uS4 from Synechococcus sp. (strain CC9902).